The primary structure comprises 148 residues: Deoxyuridine 5'-triphosphate nucleotidohydrolase (148 aa).

Residues 67-69, Asn-80, 84-86, and Lys-94 each bind substrate; these read RSG and TID.

The protein belongs to the dUTPase family. It depends on Mg(2+) as a cofactor.

It catalyses the reaction dUTP + H2O = dUMP + diphosphate + H(+). It functions in the pathway pyrimidine metabolism; dUMP biosynthesis; dUMP from dCTP (dUTP route): step 2/2. Functionally, this enzyme is involved in nucleotide metabolism: it produces dUMP, the immediate precursor of thymidine nucleotides and it decreases the intracellular concentration of dUTP so that uracil cannot be incorporated into DNA. The chain is Deoxyuridine 5'-triphosphate nucleotidohydrolase from Orientia tsutsugamushi (strain Ikeda) (Rickettsia tsutsugamushi).